The following is a 258-amino-acid chain: Type II restriction enzyme HincII (258 aa).

It catalyses the reaction Endonucleolytic cleavage of DNA to give specific double-stranded fragments with terminal 5'-phosphates.. Functionally, a P subtype restriction enzyme that recognizes the double-stranded sequence 5'-GTYRAC-3' and cleaves after Y-3. This Haemophilus influenzae protein is Type II restriction enzyme HincII (hincIIR).